Here is a 132-residue protein sequence, read N- to C-terminus: Small ribosomal subunit protein uS8 (132 aa).

The protein belongs to the universal ribosomal protein uS8 family. In terms of assembly, part of the 30S ribosomal subunit. Contacts proteins S5 and S12.

Its function is as follows. One of the primary rRNA binding proteins, it binds directly to 16S rRNA central domain where it helps coordinate assembly of the platform of the 30S subunit. The sequence is that of Small ribosomal subunit protein uS8 from Leuconostoc mesenteroides subsp. mesenteroides (strain ATCC 8293 / DSM 20343 / BCRC 11652 / CCM 1803 / JCM 6124 / NCDO 523 / NBRC 100496 / NCIMB 8023 / NCTC 12954 / NRRL B-1118 / 37Y).